The primary structure comprises 563 residues: MTPPGAPKYVIGVDFGTLSGRALVVRVADGAEMGSAEHTYRHGVVTEALPGHPEVRLPADYALQVPADYIDVLRFAIPEAVANAGIDPADVVGLGTDFTACTMVAATSDGTPLCQLDEFADRPHAYAKLWRHHAAQPQADRINALAAARGETWLPRYGGLISSEWEFAKGLQILEEDPEIYAAIDRWVEGADWIVWQLTGRYVRNISTAGYKAIRQDGKYPSRAFLAELNPGFASFVEDKIEQPIGRLGEAAGTLTAQAAAWTGLPEGIVVAVGNIDAHVTAAAADAADPGRLIAIMGTSTCHVMNGRFLREVPGMCGVVDGGITDGLWGYEAGQSGVGDIFAWFTKNCVPKEIAIEASRRGLTLHEHLSELAAEQEVGEHGLVALDWHSGNRSVLVDHHLSGIMVGQTLDTTCVDQYRALLEATAFGTRMIVETFQRSGVPVEELVVAGGLIKNPLLMQIYADVTGLPLSCVTSTQAPALGAAIHAAAAAGEYRDVPTASARMGGRTKNAFTPIPENVTRYNALYAAYVELHDWFGRNNPLMRRLRVMRSNAERRETVGSAQ.

It belongs to the ribulokinase family.

The enzyme catalyses D-ribulose + ATP = D-ribulose 5-phosphate + ADP + H(+). It catalyses the reaction L-ribulose + ATP = L-ribulose 5-phosphate + ADP + H(+). It functions in the pathway carbohydrate degradation; L-arabinose degradation via L-ribulose; D-xylulose 5-phosphate from L-arabinose (bacterial route): step 2/3. This is Ribulokinase from Mycolicibacterium smegmatis (Mycobacterium smegmatis).